Reading from the N-terminus, the 134-residue chain is UPF0719 transmembrane protein YshE (134 aa).

Helical transmembrane passes span Val-10–Phe-30, Ala-48–Ile-68, Ile-78–Leu-98, and Ala-114–Ile-134.

Belongs to the UPF0719 family.

It is found in the cell membrane. This chain is UPF0719 transmembrane protein YshE (yshE), found in Bacillus subtilis (strain 168).